The chain runs to 319 residues: Lipoyl synthase (319 aa).

The segment at 1–24 is disordered; it reads MAVVIDTVGARPRHPEKQANPDTP. Basic and acidic residues predominate over residues 13 to 24; that stretch reads RHPEKQANPDTP. [4Fe-4S] cluster-binding residues include Cys58, Cys63, Cys69, Cys84, Cys88, Cys91, and Ser298. A Radical SAM core domain is found at 70–287; it reads WDKSHATFMI…EEIARAKGFL (218 aa).

This sequence belongs to the radical SAM superfamily. Lipoyl synthase family. [4Fe-4S] cluster is required as a cofactor.

The protein resides in the cytoplasm. The enzyme catalyses [[Fe-S] cluster scaffold protein carrying a second [4Fe-4S](2+) cluster] + N(6)-octanoyl-L-lysyl-[protein] + 2 oxidized [2Fe-2S]-[ferredoxin] + 2 S-adenosyl-L-methionine + 4 H(+) = [[Fe-S] cluster scaffold protein] + N(6)-[(R)-dihydrolipoyl]-L-lysyl-[protein] + 4 Fe(3+) + 2 hydrogen sulfide + 2 5'-deoxyadenosine + 2 L-methionine + 2 reduced [2Fe-2S]-[ferredoxin]. Its pathway is protein modification; protein lipoylation via endogenous pathway; protein N(6)-(lipoyl)lysine from octanoyl-[acyl-carrier-protein]: step 2/2. Functionally, catalyzes the radical-mediated insertion of two sulfur atoms into the C-6 and C-8 positions of the octanoyl moiety bound to the lipoyl domains of lipoate-dependent enzymes, thereby converting the octanoylated domains into lipoylated derivatives. This Phenylobacterium zucineum (strain HLK1) protein is Lipoyl synthase.